The chain runs to 372 residues: UDP-N-acetylglucosamine--N-acetylmuramyl-(pentapeptide) pyrophosphoryl-undecaprenol N-acetylglucosamine transferase (372 aa).

UDP-N-acetyl-alpha-D-glucosamine-binding positions include 16 to 18, Asn128, Arg164, Ser192, Ile250, and Gln295; that span reads TGG.

It belongs to the glycosyltransferase 28 family. MurG subfamily.

It is found in the cell inner membrane. It catalyses the reaction di-trans,octa-cis-undecaprenyl diphospho-N-acetyl-alpha-D-muramoyl-L-alanyl-D-glutamyl-meso-2,6-diaminopimeloyl-D-alanyl-D-alanine + UDP-N-acetyl-alpha-D-glucosamine = di-trans,octa-cis-undecaprenyl diphospho-[N-acetyl-alpha-D-glucosaminyl-(1-&gt;4)]-N-acetyl-alpha-D-muramoyl-L-alanyl-D-glutamyl-meso-2,6-diaminopimeloyl-D-alanyl-D-alanine + UDP + H(+). The protein operates within cell wall biogenesis; peptidoglycan biosynthesis. In terms of biological role, cell wall formation. Catalyzes the transfer of a GlcNAc subunit on undecaprenyl-pyrophosphoryl-MurNAc-pentapeptide (lipid intermediate I) to form undecaprenyl-pyrophosphoryl-MurNAc-(pentapeptide)GlcNAc (lipid intermediate II). The chain is UDP-N-acetylglucosamine--N-acetylmuramyl-(pentapeptide) pyrophosphoryl-undecaprenol N-acetylglucosamine transferase from Paraburkholderia phytofirmans (strain DSM 17436 / LMG 22146 / PsJN) (Burkholderia phytofirmans).